The primary structure comprises 409 residues: Putative integrase/recombinase y4rA (409 aa).

A Core-binding (CB) domain is found at 112–197 (SAVEQHVQAY…ALRSFLSYAR (86 aa)). Residues 220–402 (SIPRAIGRDD…DLDALRTLAL (183 aa)) form the Tyr recombinase domain. Active-site residues include R260, K284, H354, R357, and H380. The active-site O-(3'-phospho-DNA)-tyrosine intermediate is the Y389.

Belongs to the 'phage' integrase family.

This Sinorhizobium fredii (strain NBRC 101917 / NGR234) protein is Putative integrase/recombinase y4rA.